The primary structure comprises 427 residues: tRNA(Ile)-lysidine synthase (427 aa).

18–23 (SGGLDS) is a binding site for ATP.

The protein belongs to the tRNA(Ile)-lysidine synthase family.

Its subcellular location is the cytoplasm. It carries out the reaction cytidine(34) in tRNA(Ile2) + L-lysine + ATP = lysidine(34) in tRNA(Ile2) + AMP + diphosphate + H(+). Functionally, ligates lysine onto the cytidine present at position 34 of the AUA codon-specific tRNA(Ile) that contains the anticodon CAU, in an ATP-dependent manner. Cytidine is converted to lysidine, thus changing the amino acid specificity of the tRNA from methionine to isoleucine. The sequence is that of tRNA(Ile)-lysidine synthase from Pseudomonas putida (strain ATCC 47054 / DSM 6125 / CFBP 8728 / NCIMB 11950 / KT2440).